The chain runs to 354 residues: Probable protein phosphatase 2C 27 (354 aa).

One can recognise a PPM-type phosphatase domain in the interval 54 to 319 (RSGDWSDIGG…DNLTAVMVSF (266 aa)). Residues D98, G99, D267, and D310 each contribute to the Mn(2+) site.

This sequence belongs to the PP2C family. The cofactor is Mg(2+). It depends on Mn(2+) as a cofactor.

The catalysed reaction is O-phospho-L-seryl-[protein] + H2O = L-seryl-[protein] + phosphate. It catalyses the reaction O-phospho-L-threonyl-[protein] + H2O = L-threonyl-[protein] + phosphate. This is Probable protein phosphatase 2C 27 from Oryza sativa subsp. japonica (Rice).